A 950-amino-acid polypeptide reads, in one-letter code: Protocadherin alpha-3 (950 aa).

The N-terminal stretch at 1–29 is a signal peptide; it reads MLFSWREDPGAQCLLLSLLLLAASEVGSG. Cadherin domains are found at residues 30 to 133, 134 to 242, 243 to 350, 351 to 455, 456 to 565, and 581 to 678; these read QLHY…APVF, PMSV…APAF, ERTI…VPEL, VIHS…APAF, SQSE…APAL, and VPRS…APKA. The Extracellular portion of the chain corresponds to 30-697; it reads QLHYSVSEEA…GPEAALVDVN (668 aa). Residues N257 and N265 are each glycosylated (N-linked (GlcNAc...) asparagine). N548 carries N-linked (GlcNAc...) asparagine glycosylation. Residues 698-718 traverse the membrane as a helical segment; that stretch reads VYLIVAICAVSSLLVLTLLLY. The Cytoplasmic portion of the chain corresponds to 719 to 950; the sequence is TALRCSAPPT…GNSTTDNSDQ (232 aa). PXXP repeat units follow at residues 734-737 and 774-777; these read PGKP and PSLP. The 6 X 4 AA repeats of P-X-X-P stretch occupies residues 734–894; it reads PGKPTLVCSS…PDKFIIPGSP (161 aa). Disordered regions lie at residues 777–806, 831–856, and 869–889; these read PPCP…NPDW, GPGG…EVSP, and FKYG…DKFI. Basic and acidic residues predominate over residues 782–797; that stretch reads SRDREEKQDVDVDLSA. PXXP repeat units follow at residues 799–802, 832–835, 873–876, and 891–894; these read PRQP, PGGP, PGNP, and PGSP. Positions 901 to 950 are disordered; it reads QEPANSQIDKSDFITFGKKEETKKKKKKKKGNKTQEKKEKGNSTTDNSDQ. Over residues 909–923 the composition is skewed to basic and acidic residues; sequence DKSDFITFGKKEETK.

The protein resides in the cell membrane. Potential calcium-dependent cell-adhesion protein. May be involved in the establishment and maintenance of specific neuronal connections in the brain. In Pan troglodytes (Chimpanzee), this protein is Protocadherin alpha-3 (PCDHA3).